Reading from the N-terminus, the 373-residue chain is Sorting nexin-21 (373 aa).

Positions 1–107 (MHRGTQEGAM…RSPPPDGQWG (107 aa)) are disordered. Residues 21-37 (ALAGDGPGEAAASPEAE) show a composition bias toward low complexity. A compositionally biased stretch (polar residues) spans 55 to 65 (SRLSGTLSFTS). A compositionally biased stretch (acidic residues) spans 66–81 (AEDDEDDEDEDDEEAG). Residues 129–246 (QRLLFEVTSA…DFFVLPELRR (118 aa)) form the PX domain. A 1,2-diacyl-sn-glycero-3-phospho-(1D-myo-inositol-3-phosphate) contacts are provided by Arg-171, Ser-173, Lys-198, and Arg-212.

It belongs to the sorting nexin family. Monomer. As to expression, highly expressed in fetus liver, but only weakly expressed in brain, skeleton muscle, smooth muscle, and cardiac muscle, kidney, and adrenal gland.

It is found in the cytoplasmic vesicle membrane. Its subcellular location is the early endosome membrane. Functionally, binds to membranes enriched in phosphatidylinositol 3-phosphate (PtdIns(P3)) and phosphatidylinositol 4,5-bisphosphate. May be involved in several stages of intracellular trafficking. The polypeptide is Sorting nexin-21 (SNX21) (Homo sapiens (Human)).